The following is a 283-amino-acid chain: Pantothenate synthetase (283 aa).

An ATP-binding site is contributed by 30 to 37; it reads MGNLHDGH. Catalysis depends on His-37, which acts as the Proton donor. Gln-61 provides a ligand contact to (R)-pantoate. Gln-61 is a beta-alanine binding site. 149–152 contacts ATP; the sequence is GEKD. Residue Gln-155 coordinates (R)-pantoate. 186 to 189 provides a ligand contact to ATP; that stretch reads LSSR.

It belongs to the pantothenate synthetase family. As to quaternary structure, homodimer.

The protein localises to the cytoplasm. The catalysed reaction is (R)-pantoate + beta-alanine + ATP = (R)-pantothenate + AMP + diphosphate + H(+). It participates in cofactor biosynthesis; (R)-pantothenate biosynthesis; (R)-pantothenate from (R)-pantoate and beta-alanine: step 1/1. Catalyzes the condensation of pantoate with beta-alanine in an ATP-dependent reaction via a pantoyl-adenylate intermediate. This chain is Pantothenate synthetase, found in Escherichia coli O45:K1 (strain S88 / ExPEC).